Reading from the N-terminus, the 33-residue chain is Lysozyme C, spleen isozyme (33 aa).

It belongs to the glycosyl hydrolase 22 family. Monomer.

It catalyses the reaction Hydrolysis of (1-&gt;4)-beta-linkages between N-acetylmuramic acid and N-acetyl-D-glucosamine residues in a peptidoglycan and between N-acetyl-D-glucosamine residues in chitodextrins.. Functionally, lysozymes have primarily a bacteriolytic function; those in tissues and body fluids are associated with the monocyte-macrophage system and enhance the activity of immunoagents. This chain is Lysozyme C, spleen isozyme, found in Equus caballus (Horse).